The chain runs to 119 residues: Protein TusC (119 aa).

Belongs to the DsrF/TusC family. In terms of assembly, heterohexamer, formed by a dimer of trimers. The hexameric TusBCD complex contains 2 copies each of TusB, TusC and TusD. The TusBCD complex interacts with TusE.

It is found in the cytoplasm. Part of a sulfur-relay system required for 2-thiolation of 5-methylaminomethyl-2-thiouridine (mnm(5)s(2)U) at tRNA wobble positions. The chain is Protein TusC from Cronobacter sakazakii (strain ATCC BAA-894) (Enterobacter sakazakii).